The chain runs to 130 residues: Small ribosomal subunit protein uS9 (130 aa).

It belongs to the universal ribosomal protein uS9 family.

This is Small ribosomal subunit protein uS9 from Geobacillus thermodenitrificans (strain NG80-2).